Here is a 246-residue protein sequence, read N- to C-terminus: DNA repair protein RecO (246 aa).

This sequence belongs to the RecO family.

In terms of biological role, involved in DNA repair and RecF pathway recombination. In Methylobacterium nodulans (strain LMG 21967 / CNCM I-2342 / ORS 2060), this protein is DNA repair protein RecO.